The chain runs to 364 residues: Methylthioribose-1-phosphate isomerase (364 aa).

Catalysis depends on D254, which acts as the Proton donor.

The protein belongs to the eIF-2B alpha/beta/delta subunits family. MtnA subfamily.

It is found in the cytoplasm. The protein resides in the nucleus. It catalyses the reaction 5-(methylsulfanyl)-alpha-D-ribose 1-phosphate = 5-(methylsulfanyl)-D-ribulose 1-phosphate. It functions in the pathway amino-acid biosynthesis; L-methionine biosynthesis via salvage pathway; L-methionine from S-methyl-5-thio-alpha-D-ribose 1-phosphate: step 1/6. Functionally, catalyzes the interconversion of methylthioribose-1-phosphate (MTR-1-P) into methylthioribulose-1-phosphate (MTRu-1-P). This is Methylthioribose-1-phosphate isomerase from Drosophila yakuba (Fruit fly).